We begin with the raw amino-acid sequence, 2472 residues long: Spectrin alpha chain, non-erythrocytic 1 (2472 aa).

M1 bears the N-acetylmethionine mark. Spectrin repeat units follow at residues R45 to L146, K150 to L251, E256 to D358, Y361 to Q465, D468 to A570, H574 to E676, Q679 to A781, R785 to D888, and Q891 to A961. Phosphoserine is present on S587. K637 carries the N6-acetyllysine modification. The residue at position 803 (K803) is an N6-acetyllysine. Phosphoserine is present on residues S924, S982, S999, S1029, S1031, and S1041. Residues T967 to P1026 form the SH3 domain. The stretch at L1096–E1166 is one Spectrin 10 repeat. The residue at position 1176 (Y1176) is a Phosphotyrosine. Phosphoserine is present on residues S1190, S1207, S1217, S1291, S1306, S1323, and S1338. Residues H1233 to G1336 form a Spectrin 11 repeat. Spectrin repeat units lie at residues H1339–L1441 and E1446–E1549. N6-acetyllysine is present on K1519. Phosphoserine occurs at positions 1550, 1557, 1578, 1615, and 1647. 7 Spectrin repeats span residues T1552–E1656, K1659–E1762, H1764–E1868, E1871–E1974, F1978–E2081, L2092–Q2194, and L2206–Q2310. The residue at position 2020 (T2020) is a Phosphothreonine. Position 2052 is an N6-acetyllysine (K2052). T2066 bears the Phosphothreonine mark. 3 consecutive EF-hand domains span residues E2323–D2358, E2366–E2401, and K2404–D2439. Ca(2+) contacts are provided by D2336, D2338, S2340, R2342, E2347, D2379, N2381, D2383, H2385, and E2390. At K2421 the chain carries N6-acetyllysine.

It belongs to the spectrin family. In terms of assembly, like erythrocyte spectrin, the spectrin-like proteins are capable of forming dimers which can further associate to tetramers. Interacts (via C-terminal spectrin repeats) with TRPC4. Interacts with CALM and EMD. Interacts with isoform 1 of ACP1. Identified in a complex with ACTN4, CASK, IQGAP1, MAGI2, NPHS1 and SPTBN1. Interacts with SHANK3 (via ANK repeats). Interacts with CLN3; this interaction regulates the fodrin localization at the plasma membrane. Post-translationally, phosphorylation of Tyr-1176 decreases sensitivity to cleavage by calpain in vitro. In terms of tissue distribution, expressed in the foot process layer of podocytes in the kidney glomerulus and in tubules (at protein level).

It localises to the cytoplasm. Its subcellular location is the cytoskeleton. The protein localises to the cell cortex. Its function is as follows. Fodrin, which seems to be involved in secretion, interacts with calmodulin in a calcium-dependent manner and is thus candidate for the calcium-dependent movement of the cytoskeleton at the membrane. The chain is Spectrin alpha chain, non-erythrocytic 1 (Sptan1) from Rattus norvegicus (Rat).